The chain runs to 121 residues: Large ribosomal subunit protein bL12 (121 aa).

The protein belongs to the bacterial ribosomal protein bL12 family. As to quaternary structure, homodimer. Part of the ribosomal stalk of the 50S ribosomal subunit. Forms a multimeric L10(L12)X complex, where L10 forms an elongated spine to which 2 to 4 L12 dimers bind in a sequential fashion. Binds GTP-bound translation factors.

Functionally, forms part of the ribosomal stalk which helps the ribosome interact with GTP-bound translation factors. Is thus essential for accurate translation. The chain is Large ribosomal subunit protein bL12 from Pseudomonas savastanoi pv. phaseolicola (strain 1448A / Race 6) (Pseudomonas syringae pv. phaseolicola (strain 1448A / Race 6)).